Reading from the N-terminus, the 186-residue chain is Peptidyl-tRNA hydrolase (186 aa).

Residue Tyr-14 coordinates tRNA. The active-site Proton acceptor is His-19. Residues Tyr-64, Asn-66, and Asn-112 each contribute to the tRNA site.

This sequence belongs to the PTH family. As to quaternary structure, monomer.

Its subcellular location is the cytoplasm. It carries out the reaction an N-acyl-L-alpha-aminoacyl-tRNA + H2O = an N-acyl-L-amino acid + a tRNA + H(+). In terms of biological role, hydrolyzes ribosome-free peptidyl-tRNAs (with 1 or more amino acids incorporated), which drop off the ribosome during protein synthesis, or as a result of ribosome stalling. Functionally, catalyzes the release of premature peptidyl moieties from peptidyl-tRNA molecules trapped in stalled 50S ribosomal subunits, and thus maintains levels of free tRNAs and 50S ribosomes. In Geobacillus thermodenitrificans (strain NG80-2), this protein is Peptidyl-tRNA hydrolase.